The primary structure comprises 333 residues: 4-hydroxyproline 2-epimerase (333 aa).

C91 (proton acceptor) is an active-site residue. Residues 92–93 (GH), H225, and D250 contribute to the substrate site. C254 functions as the Proton donor in the catalytic mechanism. Residue 255–256 (GT) participates in substrate binding.

It belongs to the proline racemase family.

It catalyses the reaction trans-4-hydroxy-L-proline = cis-4-hydroxy-D-proline. Functionally, catalyzes the epimerization of trans-4-hydroxy-L-proline (t4LHyp) to cis-4-hydroxy-D-proline (c4DHyp). Is likely involved in a degradation pathway that converts t4LHyp to alpha-ketoglutarate. Displays no proline racemase activity. This Streptosporangium roseum (strain ATCC 12428 / DSM 43021 / JCM 3005 / KCTC 9067 / NCIMB 10171 / NRRL 2505 / NI 9100) protein is 4-hydroxyproline 2-epimerase.